Consider the following 79-residue polypeptide: Acyl carrier protein (79 aa).

Residues 1 to 79 (MTKEQILVDV…DVVSYIETQV (79 aa)) enclose the Carrier domain. O-(pantetheine 4'-phosphoryl)serine is present on Ser39.

Belongs to the acyl carrier protein (ACP) family. Post-translationally, 4'-phosphopantetheine is transferred from CoA to a specific serine of apo-ACP by AcpS. This modification is essential for activity because fatty acids are bound in thioester linkage to the sulfhydryl of the prosthetic group.

It is found in the cytoplasm. The protein operates within lipid metabolism; fatty acid biosynthesis. Functionally, carrier of the growing fatty acid chain in fatty acid biosynthesis. The chain is Acyl carrier protein from Exiguobacterium sibiricum (strain DSM 17290 / CCUG 55495 / CIP 109462 / JCM 13490 / 255-15).